A 225-amino-acid chain; its full sequence is MASPSSFCLLAVLLALVSWQAIASDPSPLQDFCVADKHSPVLVNGFACLDPKYVNADHFFKAAMLDTPRKTNKVGSNVTLINVMQIPGLNTLGISIARIDYAPLGENPPHTHPRATEILTVLEGTLYVGFVTSNPNNTLFSKVLNKGDVFVFPEGLIHFQFNPNPHQPAVALAALSSQNPGAITIANAVFGSKPPISDDILAKAFQVEKGTIDWLQAQFWENNHY.

A signal peptide spans 1-23 (MASPSSFCLLAVLLALVSWQAIA). Residues cysteine 33 and cysteine 48 are joined by a disulfide bond. The Cupin type-1 domain maps to 63-213 (AMLDTPRKTN…AFQVEKGTID (151 aa)). Residue asparagine 77 is glycosylated (N-linked (GlcNAc...) asparagine). Mn(2+) contacts are provided by histidine 110, histidine 112, and glutamate 117. N-linked (GlcNAc...) asparagine glycosylation is present at asparagine 136. A Mn(2+)-binding site is contributed by histidine 158.

This sequence belongs to the germin family. Oligomer (believed to be a pentamer but probably hexamer).

The protein resides in the secreted. It localises to the extracellular space. Its subcellular location is the apoplast. Its function is as follows. Plays a role in broad-spectrum disease resistance. Probably has no oxalate oxidase activity even if the active site is conserved. In Oryza sativa subsp. japonica (Rice), this protein is Germin-like protein 8-7 (GER6).